A 234-amino-acid chain; its full sequence is Opacity protein opA55 (234 aa).

Residue alanine 1 is a signal peptide.

This sequence belongs to the opacity porin family.

It localises to the cell outer membrane. Its function is as follows. Implicated in a number of adherence functions. OPA proteins are implicated in pathogenesis and are subject to phase variation. The protein is Opacity protein opA55 (opaE) of Neisseria gonorrhoeae.